Reading from the N-terminus, the 393-residue chain is S-adenosylmethionine synthase 1 (393 aa).

Residue Glu-9 participates in Mg(2+) binding. Residue His-15 participates in ATP binding. Glu-43 contributes to the K(+) binding site. L-methionine contacts are provided by Glu-56 and Gln-99. ATP is bound by residues 167 to 169 (DGK), 235 to 238 (SGRF), Asp-246, 252 to 253 (RK), Ala-269, Lys-273, and Lys-277. Position 246 (Asp-246) interacts with L-methionine. Lys-277 is a binding site for L-methionine.

It belongs to the AdoMet synthase family. As to quaternary structure, homotetramer. Mn(2+) is required as a cofactor. Mg(2+) serves as cofactor. It depends on Co(2+) as a cofactor. Requires K(+) as cofactor. The cofactor is NH4(+). As to expression, mostly expressed in roots, and, to a lower extent, in hypocotyls and cotyledons.

Its subcellular location is the cytoplasm. It catalyses the reaction L-methionine + ATP + H2O = S-adenosyl-L-methionine + phosphate + diphosphate. It functions in the pathway amino-acid biosynthesis; S-adenosyl-L-methionine biosynthesis; S-adenosyl-L-methionine from L-methionine: step 1/1. With respect to regulation, inhibited by products of SAMS reaction (SAM, Pi, PPi), substrate analogs (cycloleucine and ethionine), and alternative nucleotides (GTP, CTP and ADP). Strongly repressed by PPPi. Catalyzes the formation of S-adenosylmethionine from methionine and ATP. The reaction comprises two steps that are both catalyzed by the same enzyme: formation of S-adenosylmethionine (AdoMet) and triphosphate, and subsequent hydrolysis of the triphosphate. The sequence is that of S-adenosylmethionine synthase 1 (SAMS1) from Catharanthus roseus (Madagascar periwinkle).